The primary structure comprises 449 residues: Phosphoglucosamine mutase (449 aa).

S101 (phosphoserine intermediate) is an active-site residue. The Mg(2+) site is built by S101, D241, D243, and D245. S101 carries the post-translational modification Phosphoserine.

It belongs to the phosphohexose mutase family. Mg(2+) is required as a cofactor. In terms of processing, activated by phosphorylation.

It catalyses the reaction alpha-D-glucosamine 1-phosphate = D-glucosamine 6-phosphate. Functionally, catalyzes the conversion of glucosamine-6-phosphate to glucosamine-1-phosphate. This chain is Phosphoglucosamine mutase, found in Ruminiclostridium cellulolyticum (strain ATCC 35319 / DSM 5812 / JCM 6584 / H10) (Clostridium cellulolyticum).